The chain runs to 497 residues: Serine/threonine-protein phosphatase 2A 56 kDa regulatory subunit beta isoform (497 aa).

Residues 1 to 19 show a composition bias toward low complexity; that stretch reads METKLPPASTPTSPSSPGL. 2 disordered regions span residues 1 to 55 and 475 to 497; these read METK…YQSN and TQGA…GGQS. 6 positions are modified to phosphoserine; by CLK2: Ser32, Ser35, Ser44, Ser46, Ser47, and Ser48. Residues 34 to 45 show a composition bias toward basic residues; that stretch reads RSLRRARPRRSH.

Belongs to the phosphatase 2A regulatory subunit B56 family. As to quaternary structure, component of the serine/threonine-protein phosphatase 2A complex (PP2A). This complex consists of a common heterodimeric core enzyme, composed of a 36 kDa catalytic subunit (subunit C) and a 65 kDa constant scaffold subunit (PR65 or subunit A), that associates with a variety of regulatory subunits. Proteins that associate with the core dimer include three families of regulatory subunits B (the R2/B/PR55/B55, R3/B''/PR72/PR130/PR59 and R5/B'/B56 families), the 48 kDa variable regulatory subunit, viral proteins, and cell signaling molecules. Interacts with SGO1. Interacts with AKT1. Interacts with CUL3 and KLHL15; this interaction leads to proteasomal degradation. In terms of processing, ubiquitinated by E3 CUL3-KLHL15 complex; this modification leads to proteasomal degradation. Highest expression in brain.

Its subcellular location is the cytoplasm. Its function is as follows. As the regulatory component of the serine/threonine-protein phosphatase 2A (PP2A) holoenzyme, modulates substrate specificity, subcellular localization, and responsiveness to phosphorylation. The phosphorylated form mediates the interaction between PP2A and AKT1, leading to AKT1 dephosphorylation. This chain is Serine/threonine-protein phosphatase 2A 56 kDa regulatory subunit beta isoform (PPP2R5B), found in Homo sapiens (Human).